The chain runs to 134 residues: uncharacterized protein (134 aa).

Belongs to the ycf68 family.

The protein localises to the plastid. It localises to the chloroplast. This is an uncharacterized protein from Saccharum hybrid (Sugarcane).